We begin with the raw amino-acid sequence, 342 residues long: Ribosomal RNA small subunit methyltransferase C (342 aa).

The protein belongs to the methyltransferase superfamily. RsmC family. Monomer.

The protein localises to the cytoplasm. The enzyme catalyses guanosine(1207) in 16S rRNA + S-adenosyl-L-methionine = N(2)-methylguanosine(1207) in 16S rRNA + S-adenosyl-L-homocysteine + H(+). Functionally, specifically methylates the guanine in position 1207 of 16S rRNA in the 30S particle. The protein is Ribosomal RNA small subunit methyltransferase C of Shewanella sp. (strain MR-4).